The chain runs to 92 residues: Large ribosomal subunit protein bL25 (92 aa).

The protein belongs to the bacterial ribosomal protein bL25 family. Part of the 50S ribosomal subunit; part of the 5S rRNA/L5/L18/L25 subcomplex. Contacts the 5S rRNA. Binds to the 5S rRNA independently of L5 and L18.

Functionally, this is one of the proteins that binds to the 5S RNA in the ribosome where it forms part of the central protuberance. The protein is Large ribosomal subunit protein bL25 of Vibrio atlanticus (strain LGP32) (Vibrio splendidus (strain Mel32)).